A 331-amino-acid polypeptide reads, in one-letter code: 6-phosphogluconolactonase (331 aa).

The protein belongs to the cycloisomerase 2 family.

It catalyses the reaction 6-phospho-D-glucono-1,5-lactone + H2O = 6-phospho-D-gluconate + H(+). It functions in the pathway carbohydrate degradation; pentose phosphate pathway; D-ribulose 5-phosphate from D-glucose 6-phosphate (oxidative stage): step 2/3. In terms of biological role, catalyzes the hydrolysis of 6-phosphogluconolactone to 6-phosphogluconate. In Enterobacter sp. (strain 638), this protein is 6-phosphogluconolactonase.